The following is an 867-amino-acid chain: Protein translocase subunit SecA (867 aa).

Residues glutamine 86, 104–108 (GEGKT), and aspartate 499 each bind ATP. 4 residues coordinate Zn(2+): cysteine 848, cysteine 850, cysteine 859, and histidine 860.

This sequence belongs to the SecA family. Monomer and homodimer. Part of the essential Sec protein translocation apparatus which comprises SecA, SecYEG and auxiliary proteins SecDF-YajC and YidC. Zn(2+) serves as cofactor.

It is found in the cell membrane. It localises to the cytoplasm. It carries out the reaction ATP + H2O + cellular proteinSide 1 = ADP + phosphate + cellular proteinSide 2.. Part of the Sec protein translocase complex. Interacts with the SecYEG preprotein conducting channel. Has a central role in coupling the hydrolysis of ATP to the transfer of proteins into and across the cell membrane, serving both as a receptor for the preprotein-SecB complex and as an ATP-driven molecular motor driving the stepwise translocation of polypeptide chains across the membrane. The protein is Protein translocase subunit SecA of Wolbachia sp. subsp. Brugia malayi (strain TRS).